A 486-amino-acid polypeptide reads, in one-letter code: MLELKDPSLLKQQAFIDGLWVSADSGETFAVTNPATGDELARIPQMGAAEAERAVLAAHRAFKPWKRKTAKERAELLQRWYALMLENQEDLARLLTAEQGKPLAEAHGELGNGMSFVQWFAEEAKRVYGDTIPQPSADKRLIVTKEPIGVTAAITPWNFPHAMITRKVAPALAAGCSMVLRPASQTPLSALALVALAERAGIPAGVFSVVTGSATQIGSVLTGHPLVRKFSFTGSTPVGKLLIGQCAETVKKVSMELGGNAPFIVFDDADLDLAVEGAMLSKFRNAGQTCVCANRIYVQDGIYERFAEKLAAAASGLRLGNGVEAGVTQGPMIDENAVRKVEEHISDALEKGARLIAGGQRHALGGSFFEPTVLTEVTAQMKVAHEETFGPLAPLFRFSSEDEVVELANATEFGLASYFYSRDIGRVLRVSEDLEYGMVGVNTAAIANEMAPFGGVKQSGLGREGSRYGIEDYLEIKYVCLGGVDR.

NADP(+) contacts are provided by residues 157-158 (WN), 181-184 (RPAS), and 234-235 (GS). Glu-256 (proton acceptor) is an active-site residue. Leu-257 serves as a coordination point for NADP(+). Cys-290 acts as the Nucleophile in catalysis. Glu-387 is an NADP(+) binding site.

This sequence belongs to the aldehyde dehydrogenase family.

It catalyses the reaction (2S)-3-sulfolactaldehyde + NADP(+) + H2O = (2S)-3-sulfolactate + NADPH + 2 H(+). The enzyme catalyses (2S)-3-sulfolactaldehyde + NAD(+) + H2O = (2S)-3-sulfolactate + NADH + 2 H(+). In terms of biological role, catalyzes the oxidation of (2S)-3-sulfolactaldehyde to (2S)-3-sulfolactate, using both NAD(+) and NADP(+) as electron acceptors. Is involved in a degradation pathway of sulfoquinovose (SQ) that allows P.putida SQ1 to use SQ as the sole carbon and energy source for growth. The chain is 3-sulfolactaldehyde dehydrogenase from Pseudomonas putida (Arthrobacter siderocapsulatus).